The primary structure comprises 573 residues: Glutathione/L-cysteine transport system ATP-binding/permease protein CydC (573 aa).

Residues 1-15 (MRALLPYLALYKRHK) lie on the Cytoplasmic side of the membrane. 2 helical membrane passes run 16–36 (WMLS…IGLL) and 37–57 (TLSG…LYSF). The region spanning 20–306 (LGIVLAIVTL…VTGAFQHLGQ (287 aa)) is the ABC transmembrane type-1 domain. The Cytoplasmic segment spans residues 58–136 (NYMLPAAGVR…VDTLDHLYLR (79 aa)). A helical transmembrane segment spans residues 137–157 (VISPLVGAFVVIMVVTIGLSF). Topologically, residues 158-161 (LDFT) are periplasmic. The helical transmembrane segment at 162–182 (LAFTLGGIMLLTLFLMPPLFY) threads the bilayer. Residues 183–249 (RAGKSTGQNL…QSELTALSQA (67 aa)) lie on the Cytoplasmic side of the membrane. Residues 250–270 (IMLLIGALAVILMLWMASGGV) form a helical membrane-spanning segment. Residues 271-276 (GGNAQP) are Periplasmic-facing. The helical transmembrane segment at 277-297 (GALIALFVFCALAAFEALAPV) threads the bilayer. Residues 298-573 (TGAFQHLGQV…GRYYQFKQGL (276 aa)) lie on the Cytoplasmic side of the membrane. The 234-residue stretch at 339-572 (LTLRDVQFTY…QGRYYQFKQG (234 aa)) folds into the ABC transporter domain. 373-380 (GRTGCGKS) is an ATP binding site.

The protein belongs to the ABC transporter superfamily. Cysteine exporter (TC 3.A.1.129.1) family. Forms a heterodimer with CydD.

It is found in the cell inner membrane. It catalyses the reaction L-cysteine(in) + ATP + H2O = L-cysteine(out) + ADP + phosphate + H(+). The catalysed reaction is glutathione(in) + ATP + H2O = glutathione(out) + ADP + phosphate + H(+). ATPase activity is stimulated by various thiol compounds. The presence of heme leads to a further enhancement of thiol-stimulated ATPase activity, although a large excess of heme inhibits activity. Glutathione transport is inhibited by sodium orthovanadate, an inhibitor of ABC-type transport systems, but not by the proton ionophore carbonyl cyanide m-chlorophenylhydrazone (CCCP). Functionally, part of the ABC transporter complex CydDC that exports the reduced low-molecular-weight thiols cysteine and glutathione to the periplasm. Export of these thiol-containing redox-active molecules may be crucial for redox homeostasis in the periplasm, permitting correct assembly of various respiratory complexes and formation of correct disulfide bonds in periplasmic and secreted proteins. CydC contains transmembrane domains (TMD), which form a pore in the inner membrane, and an ATP-binding domain (NBD), which is responsible for energy generation. Required for the assembly of functional cytochrome bd-type quinol oxidases and periplasmic c-type cytochromes. Overexpression of CydDC under anaerobic conditions also results in the formation of a heme biosynthesis-derived pigment, P-574. CydDC binds heme b, but heme is probably not transported by the complex and instead has a role in regulating ATPase activity. In terms of biological role, conversely, a more recent study suggests an alternative function of CydDC: authors suggest that CydDC does not mediate the export of L-cysteine but rather reduces cytoplasmic L-cystine to L-cysteine. The principle function of CydDC would be to maintain the reduced state of cytoplasmic L-cysteine, thereby providing an important connection between sulfur metabolism, oxidative stress and resistance to antibiotics. This chain is Glutathione/L-cysteine transport system ATP-binding/permease protein CydC, found in Escherichia coli (strain K12).